Consider the following 172-residue polypeptide: Myosin regulatory light chain 12B (172 aa).

The span at 1–16 (MSSKKAKTKTTKKRPQ) shows a compositional bias: basic residues. The tract at residues 1–20 (MSSKKAKTKTTKKRPQRATS) is disordered. Position 19 is a phosphothreonine; by MLCK and ZIPK/DAPK3 (Thr-19). Ser-20 is subject to Phosphoserine; by MLCK and ZIPK/DAPK3. 3 consecutive EF-hand domains span residues 29–64 (SQIQ…LGKN), 98–133 (DPED…MGDR), and 134–169 (FTDE…GAKD). Ca(2+)-binding residues include Asp-42, Asn-44, Asp-46, and Asp-53.

Myosin is a hexamer of 2 heavy chains and 4 light chains: interacts with myosin heavy chain MYO19. Phosphorylation increases the actin-activated myosin ATPase activity and thereby regulates the contractile activity. It is required to generate the driving force in the migration of the cells but not necessary for localization of myosin-2 at the leading edge. Phosphorylation is reduced following epigallocatechin-3-O-gallate treatment. As to expression, ubiquitously expressed in various hematopoietic cells.

In terms of biological role, myosin regulatory subunit that plays an important role in regulation of both smooth muscle and nonmuscle cell contractile activity via its phosphorylation. Phosphorylation triggers actin polymerization in vascular smooth muscle. Implicated in cytokinesis, receptor capping, and cell locomotion. This is Myosin regulatory light chain 12B (MYL12B) from Homo sapiens (Human).